We begin with the raw amino-acid sequence, 305 residues long: Oxygen-dependent coproporphyrinogen-III oxidase (305 aa).

Residue Ser99 participates in substrate binding. Positions 103 and 113 each coordinate a divalent metal cation. His113 acts as the Proton donor in catalysis. 115–117 (NVR) is a binding site for substrate. Residues His152 and His182 each contribute to the a divalent metal cation site. Residues 247-282 (YVEFNLVLDRGTLFGLQTGGRTESILMSMPPLARWE) form an important for dimerization region. Residue 265–267 (GGR) participates in substrate binding.

This sequence belongs to the aerobic coproporphyrinogen-III oxidase family. In terms of assembly, homodimer. A divalent metal cation is required as a cofactor.

The protein localises to the cytoplasm. The catalysed reaction is coproporphyrinogen III + O2 + 2 H(+) = protoporphyrinogen IX + 2 CO2 + 2 H2O. It functions in the pathway porphyrin-containing compound metabolism; protoporphyrin-IX biosynthesis; protoporphyrinogen-IX from coproporphyrinogen-III (O2 route): step 1/1. In terms of biological role, involved in the heme biosynthesis. Catalyzes the aerobic oxidative decarboxylation of propionate groups of rings A and B of coproporphyrinogen-III to yield the vinyl groups in protoporphyrinogen-IX. The chain is Oxygen-dependent coproporphyrinogen-III oxidase from Vibrio cholerae serotype O1 (strain ATCC 39541 / Classical Ogawa 395 / O395).